Reading from the N-terminus, the 424-residue chain is Adenylyltransferase and sulfurtransferase UBA4 (424 aa).

ATP contacts are provided by residues glycine 76, aspartate 97, 104–108 (TNLHR), lysine 121, and 165–166 (DS). Positions 206 and 209 each coordinate Zn(2+). Cysteine 223 functions as the Glycyl thioester intermediate; for adenylyltransferase activity in the catalytic mechanism. Position 283 (cysteine 283) interacts with Zn(2+). Positions 326-422 (RNSDHVLLDV…WYSEVDQNIP (97 aa)) constitute a Rhodanese domain. Residue cysteine 382 is the Cysteine persulfide intermediate; for sulfurtransferase activity of the active site.

In the N-terminal section; belongs to the HesA/MoeB/ThiF family. UBA4 subfamily. Requires Zn(2+) as cofactor.

It localises to the cytoplasm. It is found in the cytosol. It functions in the pathway tRNA modification; 5-methoxycarbonylmethyl-2-thiouridine-tRNA biosynthesis. Its function is as follows. Plays a central role in 2-thiolation of mcm(5)S(2)U at tRNA wobble positions of cytosolic tRNA(Lys), tRNA(Glu) and tRNA(Gln). Acts by mediating the C-terminal thiocarboxylation of sulfur carrier URM1. Its N-terminus first activates URM1 as acyl-adenylate (-COAMP), then the persulfide sulfur on the catalytic cysteine is transferred to URM1 to form thiocarboxylation (-COSH) of its C-terminus. The reaction probably involves hydrogen sulfide that is generated from the persulfide intermediate and that acts as a nucleophile towards URM1. Subsequently, a transient disulfide bond is formed. Does not use thiosulfate as sulfur donor; NFS1 probably acting as a sulfur donor for thiocarboxylation reactions. Prior mcm(5) tRNA modification by the elongator complex is required for 2-thiolation. May also be involved in protein urmylation. The chain is Adenylyltransferase and sulfurtransferase UBA4 from Meyerozyma guilliermondii (strain ATCC 6260 / CBS 566 / DSM 6381 / JCM 1539 / NBRC 10279 / NRRL Y-324) (Yeast).